Reading from the N-terminus, the 309-residue chain is Olfactory receptor 5B2 (309 aa).

Over 1–23 (MENCTEVTKFILLGLTSVPELQI) the chain is Extracellular. Asparagine 3 is a glycosylation site (N-linked (GlcNAc...) asparagine). A helical membrane pass occupies residues 24–47 (PLFILFTFIYLLTLCGNLGMMLLI). Residues 48–55 (LMDSCLHT) are Cytoplasmic-facing. A helical transmembrane segment spans residues 56 to 77 (PMYFFLSNLSLVDFGYSSAVTP). Topologically, residues 78 to 98 (KVMAGFLRGDKVISYNACAVQ) are extracellular. The cysteines at positions 95 and 187 are disulfide-linked. Residues 99–118 (MFFFVALATVENYLLASMAY) form a helical membrane-spanning segment. The Cytoplasmic segment spans residues 119 to 137 (DRYAAVCKPLHYTTTMTAS). A helical transmembrane segment spans residues 138 to 156 (VGACLALGSYVCGFLNASF). Over 157-193 (HIGGIFSLSFCKSNLVHHFFCDVPAVMALSCSDKHTS) the chain is Extracellular. A helical membrane pass occupies residues 194–217 (EVILVFMSSFNIFFVLLVIFISYL). At 218–234 (FIFITILKMHSAKGHQK) the chain is on the cytoplasmic side. A helical transmembrane segment spans residues 235-257 (ALSTCASHFTAVSVFYGTVIFIY). The Extracellular segment spans residues 258–270 (LQPSSSHSMDTDK). The helical transmembrane segment at 271-290 (MASVFYAMIIPMLNPVVYSL) threads the bilayer. The Cytoplasmic segment spans residues 291-309 (RNREVQNAFKKVLRRQKFL).

It belongs to the G-protein coupled receptor 1 family.

Its subcellular location is the cell membrane. Odorant receptor. This Homo sapiens (Human) protein is Olfactory receptor 5B2 (OR5B2).